We begin with the raw amino-acid sequence, 533 residues long: Lysine--tRNA ligase (533 aa).

The 'HIGH' region signature appears at 28–36 (PSGHIHIGN). The 'KMSKS' region motif lies at 278 to 282 (PMSSS).

It belongs to the class-I aminoacyl-tRNA synthetase family.

The protein localises to the cytoplasm. The enzyme catalyses tRNA(Lys) + L-lysine + ATP = L-lysyl-tRNA(Lys) + AMP + diphosphate. This chain is Lysine--tRNA ligase (lysS), found in Methanococcus maripaludis (strain DSM 14266 / JCM 13030 / NBRC 101832 / S2 / LL).